The primary structure comprises 350 residues: Outer membrane porin PhoE (350 aa).

The N-terminal stretch at 1 to 20 (MNKSTLAIVVSIIASASVHA) is a signal peptide.

This sequence belongs to the Gram-negative porin family. In terms of assembly, homotrimer.

It localises to the cell outer membrane. Its function is as follows. Uptake of inorganic phosphate, phosphorylated compounds, and some other negatively charged solutes. This Salmonella typhimurium (strain LT2 / SGSC1412 / ATCC 700720) protein is Outer membrane porin PhoE (phoE).